A 335-amino-acid chain; its full sequence is MSSFITKTVLAALVAAAGVRAHGHVESITVGGTEYEGLNPGAAAFENPRKELAAWFATNTDNGFVEPSAFGDADIICHRGAENAVKSAKVKAGEKITIKWDTWPESHKGPVIDYLASCGSAGCAKVDKTSLKFFKIAEAGMTSGGKFASDDLIAAGNTWEVTVPTSIKAGNYVLRHEIIALHAAGQENGAQNYPQCFNLEVESDGTAEPAGVAGTSLYTASEKGIVFDLYNNPTSYPIPGPKMNIAGGSSGAAPSTPATPTTGSGSDTPSNTAAPVESAPAESAAPVESAPAAGNGNQNNGGASPVETEAPATPQPTKTGCKAKKARRHARDMMN.

A signal peptide spans M1–A21. Cu(2+) contacts are provided by H22 and H107. C77 and C196 are disulfide-bonded. The O2 site is built by H182 and Q191. Residue Y193 coordinates Cu(2+). Residues P241 to N335 form a disordered region. Over residues G251–A303 the composition is skewed to low complexity. Over residues C321–N335 the composition is skewed to basic residues.

It belongs to the polysaccharide monooxygenase AA9 family. Cu(2+) is required as a cofactor.

It localises to the secreted. The enzyme catalyses [(1-&gt;4)-beta-D-glucosyl]n+m + reduced acceptor + O2 = 4-dehydro-beta-D-glucosyl-[(1-&gt;4)-beta-D-glucosyl]n-1 + [(1-&gt;4)-beta-D-glucosyl]m + acceptor + H2O.. In terms of biological role, lytic polysaccharide monooxygenase (LPMO) that depolymerizes crystalline and amorphous polysaccharides via the oxidation of scissile alpha- or beta-(1-4)-glycosidic bonds, yielding C1 or C4 oxidation products. Catalysis by LPMOs requires the reduction of the active-site copper from Cu(II) to Cu(I) by a reducing agent and H(2)O(2) or O(2) as a cosubstrate. Is capable of cleaving cellulose, but not chitin. Is also active on tamarind xyloglucan and longer xyloglucan oligosaccharides. Has no activity toward shorter cellooligosaccharides (Glc3-6), as well as toward the xyloglucan-heptamer, birchwood xylan, wheat arabinoxylan, konjac glucomannan, ivory nut mannan, beta-glucan from barley, lichenan from Icelandic moss, starch, and spruce galactoglucomannan. Has unprecedented broad specificity on xyloglucan, cleaving any glycosidicbond in theb-glucan main chain, regardless of xylosyl substitutions. When incubated with a mixture of xyloglucan and cellulose, efficiently attacks the xyloglucan, whereas cellulose conversion is inhibited, suggesting that removal of hemicellulose may be the true function of this LPMO during biomass conversion. The chain is AA9 family lytic polysaccharide monooxygenase A from Gibberella zeae (strain ATCC MYA-4620 / CBS 123657 / FGSC 9075 / NRRL 31084 / PH-1) (Wheat head blight fungus).